The chain runs to 1019 residues: Collagen alpha-1(VI) chain (1019 aa).

The first 19 residues, 1–19 (MGLHDSFLALLLLLGGAWA), serve as a signal peptide directing secretion. In terms of domain architecture, VWFA 1 spans 37–233 (DLFFVLDTSE…LDVEETINNI (197 aa)). N-linked (GlcNAc...) asparagine glycosylation occurs at Asn-212. The tract at residues 248 to 588 (FECHPPRGPP…GPPGPVGPPG (341 aa)) is disordered. Residues 253–262 (PRGPPGPPGD) are compositionally biased toward pro residues. Basic and acidic residues-rich tracts occupy residues 299–332 (KGDKGSRGEKGSRGAKGAKGEKGKRGIDGIDGMK) and 370–380 (GKGEPGEDGKP). The span at 427-436 (ERGPPGSPGD) shows a compositional bias: low complexity. Residues 476–478 (RGD) carry the Cell attachment site motif. An N-linked (GlcNAc...) asparagine glycan is attached at Asn-514. The short motif at 529–531 (RGD) is the Cell attachment site element. A glycan (N-linked (GlcNAc...) asparagine) is linked at Asn-535. Pro residues predominate over residues 577-588 (RPGPPGPVGPPG). VWFA domains are found at residues 613–800 (DLLF…LQNI) and 824–1012 (DIML…YQTV). 2 N-linked (GlcNAc...) asparagine glycosylation sites follow: Asn-799 and Asn-887.

Belongs to the type VI collagen family. Trimers composed of three different chains: alpha 1(VI), alpha 2(VI), and alpha 3(VI). Prolines at the third position of the tripeptide repeating unit (G-X-Y) are hydroxylated in some or all of the chains.

The protein resides in the secreted. It is found in the extracellular space. The protein localises to the extracellular matrix. Its function is as follows. Collagen VI acts as a cell-binding protein. The chain is Collagen alpha-1(VI) chain (COL6A1) from Gallus gallus (Chicken).